The sequence spans 87 residues: Large ribosomal subunit protein eL31 (87 aa).

It belongs to the eukaryotic ribosomal protein eL31 family.

The polypeptide is Large ribosomal subunit protein eL31 (Methanoculleus marisnigri (strain ATCC 35101 / DSM 1498 / JR1)).